The sequence spans 132 residues: MEINFRHEINGQKVITAIAQDWKTGQILMVANMNKDALQKTIETGKAHYWSTSRNSQWLKGESSGHTQEVKEILVDCDMDAVVLKVKQNGAACHEGYFSCFFRKLNTKNIENFNEEDLETILEKVFNPDDVY.

Mg(2+) is bound at residue D76. C77 is a Zn(2+) binding site. Mg(2+) contacts are provided by D78 and D80. The Zn(2+) site is built by C93 and C100.

The protein belongs to the PRA-CH family. In terms of assembly, homodimer. Requires Mg(2+) as cofactor. Zn(2+) is required as a cofactor.

The protein resides in the cytoplasm. The enzyme catalyses 1-(5-phospho-beta-D-ribosyl)-5'-AMP + H2O = 1-(5-phospho-beta-D-ribosyl)-5-[(5-phospho-beta-D-ribosylamino)methylideneamino]imidazole-4-carboxamide. It functions in the pathway amino-acid biosynthesis; L-histidine biosynthesis; L-histidine from 5-phospho-alpha-D-ribose 1-diphosphate: step 3/9. Catalyzes the hydrolysis of the adenine ring of phosphoribosyl-AMP. The sequence is that of Phosphoribosyl-AMP cyclohydrolase from Methanobrevibacter smithii (strain ATCC 35061 / DSM 861 / OCM 144 / PS).